Consider the following 215-residue polypeptide: Nascent polypeptide-associated complex subunit alpha-2 (215 aa).

The interval 1-51 is disordered; sequence MPGEATETVPATEQELPQSQAETGSGTASDSGESVPGIEEQDSTQTTTQKA. The segment covering 9–32 has biased composition (polar residues); it reads VPATEQELPQSQAETGSGTASDSG. S43 and S132 each carry phosphoserine. An NAC-A/B domain is found at 70 to 135; that stretch reads SRSEKRARKA…AKIQDLSQQA (66 aa). K142 bears the N6-acetyllysine; alternate mark. K142 is covalently cross-linked (Glycyl lysine isopeptide (Lys-Gly) (interchain with G-Cter in SUMO2); alternate). T161 carries the phosphothreonine modification. A phosphoserine mark is found at S166, S186, S191, and S203. Residues 176 to 213 enclose the UBA domain; the sequence is VEVKDVKLVMSQANVSRAKAVRALKNNSNDIVNAIMEL. T214 carries the post-translational modification Phosphothreonine.

The protein belongs to the NAC-alpha family. Part of the nascent polypeptide-associated complex (NAC), consisting of NACA and BTF3. NAC associates with ribosomes through the BTF3 subunit. Both subunits can contact nascent polypeptide chains. Expressed specifically in testis and skeletal muscle.

It is found in the cytoplasm. The protein localises to the nucleus. Its function is as follows. Prevents inappropriate targeting of non-secretory polypeptides to the endoplasmic reticulum (ER). Binds to nascent polypeptide chains as they emerge from the ribosome and blocks their interaction with the signal recognition particle (SRP), which normally targets nascent secretory peptides to the ER. Also reduces the inherent affinity of ribosomes for protein translocation sites in the ER membrane (M sites). This is Nascent polypeptide-associated complex subunit alpha-2 (NACA2) from Homo sapiens (Human).